The primary structure comprises 602 residues: Elongation factor 4 (602 aa).

One can recognise a tr-type G domain in the interval 8-190 (DLIRNFSIVA…AIVHRLPPPK (183 aa)). Residues 20–25 (DHGKST) and 137–140 (NKID) each bind GTP.

The protein belongs to the TRAFAC class translation factor GTPase superfamily. Classic translation factor GTPase family. LepA subfamily.

It localises to the cell inner membrane. The enzyme catalyses GTP + H2O = GDP + phosphate + H(+). Its function is as follows. Required for accurate and efficient protein synthesis under certain stress conditions. May act as a fidelity factor of the translation reaction, by catalyzing a one-codon backward translocation of tRNAs on improperly translocated ribosomes. Back-translocation proceeds from a post-translocation (POST) complex to a pre-translocation (PRE) complex, thus giving elongation factor G a second chance to translocate the tRNAs correctly. Binds to ribosomes in a GTP-dependent manner. The polypeptide is Elongation factor 4 (Cereibacter sphaeroides (strain KD131 / KCTC 12085) (Rhodobacter sphaeroides)).